Reading from the N-terminus, the 482-residue chain is Alpha-ketoglutarate semialdehyde dehydrogenase (482 aa).

The tract at residues 1–28 (MTDPSKNYVNGEWVTSETGETTEVTNPA) is disordered. The segment covering 11–25 (GEWVTSETGETTEVT) has biased composition (low complexity). Cysteine 284 is a catalytic residue.

Belongs to the aldehyde dehydrogenase family. As to quaternary structure, homotetramer.

It carries out the reaction 2,5-dioxopentanoate + NADP(+) + H2O = 2-oxoglutarate + NADPH + 2 H(+). It participates in carbohydrate metabolism; D-xylose degradation. In terms of biological role, alpha-ketoglutarate semialdehyde dehydrogenase involved in the degradation of D-xylose, a major component of hemicelluloses such as xylan. Catalyzes the fifth reaction in the xylose utilization pathway through dehydratation of alpha-ketoglutarate semialdehyde (2,5-dioxopentanoate) into alpha-ketoglutarate. The sequence is that of Alpha-ketoglutarate semialdehyde dehydrogenase from Haloferax volcanii (strain ATCC 29605 / DSM 3757 / JCM 8879 / NBRC 14742 / NCIMB 2012 / VKM B-1768 / DS2) (Halobacterium volcanii).